Reading from the N-terminus, the 293-residue chain is Cytidine deaminase 8 (293 aa).

CMP/dCMP-type deaminase domains are found at residues 20–151 (FTPQ…LISQ) and 181–293 (EHCN…LHCK). 61–63 (NVE) is a binding site for substrate. H74 provides a ligand contact to Zn(2+). The active-site Proton donor is E76. Zn(2+) contacts are provided by C107 and C110.

Belongs to the cytidine and deoxycytidylate deaminase family. Homodimer. The cofactor is Zn(2+).

The enzyme catalyses cytidine + H2O + H(+) = uridine + NH4(+). It catalyses the reaction 2'-deoxycytidine + H2O + H(+) = 2'-deoxyuridine + NH4(+). In terms of biological role, this enzyme scavenges exogenous and endogenous cytidine and 2'-deoxycytidine for UMP synthesis. This Arabidopsis thaliana (Mouse-ear cress) protein is Cytidine deaminase 8 (CDA8).